Reading from the N-terminus, the 865-residue chain is Protein translocase subunit SecA (865 aa).

Residues Q85, 103 to 107, and D505 each bind ATP; that span reads GEGKT. Residues C847, C849, C858, and H859 each coordinate Zn(2+).

This sequence belongs to the SecA family. Monomer and homodimer. Part of the essential Sec protein translocation apparatus which comprises SecA, SecYEG and auxiliary proteins SecDF. Other proteins may also be involved. Zn(2+) is required as a cofactor.

The protein localises to the cell membrane. It localises to the cytoplasm. It catalyses the reaction ATP + H2O + cellular proteinSide 1 = ADP + phosphate + cellular proteinSide 2.. Its function is as follows. Part of the Sec protein translocase complex. Interacts with the SecYEG preprotein conducting channel. Has a central role in coupling the hydrolysis of ATP to the transfer of proteins into and across the cell membrane, serving as an ATP-driven molecular motor driving the stepwise translocation of polypeptide chains across the membrane. This chain is Protein translocase subunit SecA, found in Lactococcus lactis subsp. cremoris (strain SK11).